The primary structure comprises 207 residues: MKLLVASNNAKKLGELQRILDQAGIENVELLALADVPSYPEPVEDGRTFTENALIKARAGASNTGLITLADDSGLEVDALNGMPGVLSARWAGKHGNDQANNDLLLAQIADIPEEHRGAAFVSVCAIVTPDGREFVEEGRWHGTLLREPVGTNGFGYDPLFVPMEESLIEGRDRSSAQLTAQEKDALSHRGKALRALVPAIAELAGQ.

7-12 (SNNAKK) is a substrate binding site. The Proton acceptor role is filled by Asp-72. Asp-72 serves as a coordination point for Mg(2+). Residues Ser-73, 155-158 (FGYD), Lys-184, and 189-190 (HR) each bind substrate.

The protein belongs to the HAM1 NTPase family. As to quaternary structure, homodimer. The cofactor is Mg(2+).

The enzyme catalyses XTP + H2O = XMP + diphosphate + H(+). It carries out the reaction dITP + H2O = dIMP + diphosphate + H(+). It catalyses the reaction ITP + H2O = IMP + diphosphate + H(+). Functionally, pyrophosphatase that catalyzes the hydrolysis of nucleoside triphosphates to their monophosphate derivatives, with a high preference for the non-canonical purine nucleotides XTP (xanthosine triphosphate), dITP (deoxyinosine triphosphate) and ITP. Seems to function as a house-cleaning enzyme that removes non-canonical purine nucleotides from the nucleotide pool, thus preventing their incorporation into DNA/RNA and avoiding chromosomal lesions. This is dITP/XTP pyrophosphatase from Corynebacterium efficiens (strain DSM 44549 / YS-314 / AJ 12310 / JCM 11189 / NBRC 100395).